Here is a 590-residue protein sequence, read N- to C-terminus: Aspartate--tRNA(Asp/Asn) ligase (590 aa).

Residue E182 coordinates L-aspartate. Positions 206-209 are aspartate; that stretch reads QLFK. R228 provides a ligand contact to L-aspartate. Residues 228 to 230 and Q237 contribute to the ATP site; that span reads RDE. Residue H454 coordinates L-aspartate. E488 contributes to the ATP binding site. An L-aspartate-binding site is contributed by R495. ATP is bound at residue 540 to 543; it reads GLDR.

Belongs to the class-II aminoacyl-tRNA synthetase family. Type 1 subfamily. Homodimer.

The protein localises to the cytoplasm. The enzyme catalyses tRNA(Asx) + L-aspartate + ATP = L-aspartyl-tRNA(Asx) + AMP + diphosphate. In terms of biological role, aspartyl-tRNA synthetase with relaxed tRNA specificity since it is able to aspartylate not only its cognate tRNA(Asp) but also tRNA(Asn). Reaction proceeds in two steps: L-aspartate is first activated by ATP to form Asp-AMP and then transferred to the acceptor end of tRNA(Asp/Asn). This Halothermothrix orenii (strain H 168 / OCM 544 / DSM 9562) protein is Aspartate--tRNA(Asp/Asn) ligase.